The primary structure comprises 220 residues: Meiotic nuclear division protein 1 homolog (220 aa).

A coiled-coil region spans residues 76–147; that stretch reads SKALHARKRR…KVEIEKYQEC (72 aa).

This sequence belongs to the MND1 family.

It localises to the nucleus. Required for proper homologous chromosome pairing and efficient cross-over and intragenic recombination during meiosis. Stimulates both DMC1- and RAD51-mediated homologous strand assimilation, which is required for the resolution of meiotic double-strand breaks. The sequence is that of Meiotic nuclear division protein 1 homolog from Danio rerio (Zebrafish).